Reading from the N-terminus, the 353-residue chain is Quinolinate synthase (353 aa).

The iminosuccinate site is built by His47 and Ser68. Cys113 is a binding site for [4Fe-4S] cluster. Iminosuccinate contacts are provided by residues 139–141 (YAN) and Ser156. [4Fe-4S] cluster is bound at residue Cys200. Iminosuccinate contacts are provided by residues 226 to 228 (HPE) and Thr243. Cys297 contacts [4Fe-4S] cluster.

This sequence belongs to the quinolinate synthase family. Type 1 subfamily. [4Fe-4S] cluster is required as a cofactor.

The protein localises to the cytoplasm. The catalysed reaction is iminosuccinate + dihydroxyacetone phosphate = quinolinate + phosphate + 2 H2O + H(+). The protein operates within cofactor biosynthesis; NAD(+) biosynthesis; quinolinate from iminoaspartate: step 1/1. In terms of biological role, catalyzes the condensation of iminoaspartate with dihydroxyacetone phosphate to form quinolinate. The protein is Quinolinate synthase of Vibrio cholerae serotype O1 (strain ATCC 39541 / Classical Ogawa 395 / O395).